Reading from the N-terminus, the 407-residue chain is uncharacterized protein (407 aa).

This is an uncharacterized protein from Mycobacterium tuberculosis (strain CDC 1551 / Oshkosh).